The chain runs to 160 residues: Phosphopantetheine adenylyltransferase (160 aa).

S9 lines the substrate pocket. ATP is bound by residues 9–10 and H17; that span reads SF. Positions 41, 73, and 87 each coordinate substrate. ATP contacts are provided by residues 88-90, E98, and 123-129; these read GLR and YSYLSSS.

Belongs to the bacterial CoaD family. As to quaternary structure, homohexamer. Mg(2+) is required as a cofactor.

It localises to the cytoplasm. The catalysed reaction is (R)-4'-phosphopantetheine + ATP + H(+) = 3'-dephospho-CoA + diphosphate. The protein operates within cofactor biosynthesis; coenzyme A biosynthesis; CoA from (R)-pantothenate: step 4/5. Reversibly transfers an adenylyl group from ATP to 4'-phosphopantetheine, yielding dephospho-CoA (dPCoA) and pyrophosphate. This chain is Phosphopantetheine adenylyltransferase, found in Clostridium tetani (strain Massachusetts / E88).